A 352-amino-acid polypeptide reads, in one-letter code: Ion-translocating oxidoreductase complex subunit D (352 aa).

4 consecutive transmembrane segments (helical) span residues Ile20–Gly40, Gly42–Leu62, Val69–Pro91, and Pro123–Leu143. At Thr187 the chain carries FMN phosphoryl threonine. 5 consecutive transmembrane segments (helical) span residues Leu215–Leu235, Trp242–Phe262, Leu267–Leu287, Leu301–Pro321, and Asp322–Thr342.

This sequence belongs to the NqrB/RnfD family. The complex is composed of six subunits: RsxA, RsxB, RsxC, RsxD, RsxE and RsxG. FMN serves as cofactor.

It is found in the cell inner membrane. Part of a membrane-bound complex that couples electron transfer with translocation of ions across the membrane. Required to maintain the reduced state of SoxR. This is Ion-translocating oxidoreductase complex subunit D from Salmonella agona (strain SL483).